A 559-amino-acid polypeptide reads, in one-letter code: Urocanate hydratase (559 aa).

NAD(+)-binding positions include 53-54, Gln-131, 177-179, Glu-197, Arg-202, 243-244, 264-268, 274-275, and Tyr-323; these read GG, GMG, NA, QTSAH, and YL. Cys-411 is a catalytic residue. An NAD(+)-binding site is contributed by Gly-493.

Belongs to the urocanase family. It depends on NAD(+) as a cofactor.

It localises to the cytoplasm. It carries out the reaction 4-imidazolone-5-propanoate = trans-urocanate + H2O. Its pathway is amino-acid degradation; L-histidine degradation into L-glutamate; N-formimidoyl-L-glutamate from L-histidine: step 2/3. Its function is as follows. Catalyzes the conversion of urocanate to 4-imidazolone-5-propionate. The sequence is that of Urocanate hydratase from Pseudomonas aeruginosa (strain LESB58).